The sequence spans 552 residues: Terpene synthase 5 (552 aa).

Mg(2+) is bound by residues Asp307, Asp311, and Glu457. A DDXXD motif motif is present at residues 307–311 (DDTYD).

Belongs to the terpene synthase family. Mg(2+) is required as a cofactor.

Catalyzes the cyclization of farnesyl diphosphate to multiple sesquiterpenes, such as olefins and sesquiterpene alcohols. The polypeptide is Terpene synthase 5 (TPS5) (Ricinus communis (Castor bean)).